The following is a 160-amino-acid chain: Cytochrome c-type biogenesis protein CcmE (160 aa).

Residues 1 to 7 (MTRKQRR) lie on the Cytoplasmic side of the membrane. The chain crosses the membrane as a helical; Signal-anchor for type II membrane protein span at residues 8-28 (ATFIAVSLGILALAVGLVLYA). At 29–160 (MRDSIVYFYS…SETYGQGSYP (132 aa)) the chain is on the periplasmic side. Residues histidine 122 and tyrosine 126 each coordinate heme. Positions 141-160 (WQGEGAEAPHSETYGQGSYP) are disordered.

This sequence belongs to the CcmE/CycJ family.

It localises to the cell inner membrane. Heme chaperone required for the biogenesis of c-type cytochromes. Transiently binds heme delivered by CcmC and transfers the heme to apo-cytochromes in a process facilitated by CcmF and CcmH. This chain is Cytochrome c-type biogenesis protein CcmE, found in Parvibaculum lavamentivorans (strain DS-1 / DSM 13023 / NCIMB 13966).